The sequence spans 57 residues: Large ribosomal subunit protein uL30 (57 aa).

Belongs to the universal ribosomal protein uL30 family. In terms of assembly, part of the 50S ribosomal subunit.

This chain is Large ribosomal subunit protein uL30, found in Acholeplasma laidlawii (strain PG-8A).